A 416-amino-acid polypeptide reads, in one-letter code: Peptide chain release factor subunit 1 (416 aa).

The protein belongs to the eukaryotic release factor 1 family. Heterodimer of two subunits, one of which binds GTP.

It localises to the cytoplasm. Functionally, directs the termination of nascent peptide synthesis (translation) in response to the termination codons UAA, UAG and UGA. This chain is Peptide chain release factor subunit 1, found in Haloquadratum walsbyi (strain DSM 16790 / HBSQ001).